The sequence spans 125 residues: Calcitonin receptor-stimulating peptide 3 (125 aa).

The N-terminal stretch at 1-25 is a signal peptide; the sequence is MGFWKFPPFLILSILVLYQAGMLHA. The propeptide occupies 26 to 79; that stretch reads APFRMALGSSFDSATLTEEEMSLLLVAMVKDYVQMKATVLEQETEDFSITTQER. Residues Cys-81 and Cys-86 are joined by a disulfide bond. A Leucine amide modification is found at Leu-116. A propeptide spanning residues 122-125 is cleaved from the precursor; it reads QPQA.

It belongs to the calcitonin family. As to expression, mainly expressed in the thyroid gland and CNS. Found in the nerve cells of cerebrum, hippocampus, hypothalamus, pons/midbrain and thalamus.

The protein localises to the secreted. The sequence is that of Calcitonin receptor-stimulating peptide 3 (CRSP3) from Sus scrofa (Pig).